Reading from the N-terminus, the 589-residue chain is Muscarinic acetylcholine receptor M3 (589 aa).

The Extracellular segment spans residues 1–66 (MTLHSNSTTS…DPLGGHTIWQ (66 aa)). N-linked (GlcNAc...) asparagine glycans are attached at residues N6, N15, N41, N48, and N52. Residues 67–90 (VVFIAFLTGFLALVTIIGNILVIV) form a helical membrane-spanning segment. The Cytoplasmic portion of the chain corresponds to 91–103 (AFKVNKQLKTVNN). A helical membrane pass occupies residues 104 to 129 (YFLLSLACADLIIGVISMNLFTTYII). Topologically, residues 130–141 (MNRWALGNLACD) are extracellular. C140 and C220 are oxidised to a cystine. The helical transmembrane segment at 142-163 (LWLSIDYVASNASVMNLLVISF) threads the bilayer. Topologically, residues 164–183 (DRYFSITRPLTYRAKRTTKR) are cytoplasmic. The helical transmembrane segment at 184-205 (AGVMIGLAWVISFVLWAPAILF) threads the bilayer. Over 206-228 (WQYFVGKRTVPPGECFIQFLSEP) the chain is Extracellular. A helical membrane pass occupies residues 229–251 (TITFGTAIAAFYMPVTIMTILYW). At 252–490 (RIYKETEKRT…SLIKEKKAAQ (239 aa)) the chain is on the cytoplasmic side. Residues 274–280 (AEAENFV) carry the Basolateral sorting signal motif. The segment at 323–356 (AEQMDQDHSSSDSWNNNDAAASLENSASSDEEDI) is disordered. The segment covering 333-344 (SDSWNNNDAAAS) has biased composition (low complexity). Phosphoserine is present on S384. A helical membrane pass occupies residues 491–513 (TLSAILLAFIITWTPYNIMVLVN). The Extracellular portion of the chain corresponds to 514–525 (TFCDSCIPKTYW). C516 and C519 are oxidised to a cystine. Residues 526–545 (NLGYWLCYINSTVNPVCYAL) traverse the membrane as a helical segment. The Cytoplasmic portion of the chain corresponds to 546–589 (CNKTFRTTFKTLLLCQCDKRKRRKQQYQQRQSVIFHKRVPEQAL).

This sequence belongs to the G-protein coupled receptor 1 family. Muscarinic acetylcholine receptor subfamily. CHRM3 sub-subfamily. As to quaternary structure, homodimer; the dimers can form tetramers. Interacts with NALCN. Interacts with TMEM147.

It is found in the cell membrane. The protein resides in the postsynaptic cell membrane. Its subcellular location is the basolateral cell membrane. The protein localises to the endoplasmic reticulum membrane. Its function is as follows. The muscarinic acetylcholine receptor mediates various cellular responses, including inhibition of adenylate cyclase, breakdown of phosphoinositides and modulation of potassium channels through the action of G proteins. Primary transducing effect is Pi turnover. This Rattus norvegicus (Rat) protein is Muscarinic acetylcholine receptor M3 (Chrm3).